Here is a 465-residue protein sequence, read N- to C-terminus: Ribosomal oxygenase 2 (465 aa).

The JmjC domain maps to Q139–T271. 3 residues coordinate Fe cation: H179, D181, and H240. Position 309 is a phosphoserine (S309).

The protein belongs to the ROX family. MINA53 subfamily. Fe(2+) serves as cofactor.

The protein localises to the nucleus. It is found in the nucleolus. It carries out the reaction L-histidyl-[ribosomal protein uL15] + 2-oxoglutarate + O2 = (3S)-3-hydroxy-L-histidyl-[ribosomal protein uL15] + succinate + CO2. It catalyses the reaction L-histidyl-[protein] + 2-oxoglutarate + O2 = (3S)-3-hydroxy-L-histidyl-[protein] + succinate + CO2. Functionally, oxygenase that can act as both a histone lysine demethylase and a ribosomal histidine hydroxylase. Is involved in the demethylation of trimethylated 'Lys-9' on histone H3 (H3K9me3), leading to an increase in ribosomal RNA expression. Also catalyzes the hydroxylation of 60S ribosomal protein L27a on 'His-39'. May play an important role in cell growth and survival. May be involved in ribosome biogenesis, most likely during the assembly process of pre-ribosomal particles. The protein is Ribosomal oxygenase 2 (RIOX2) of Pongo abelii (Sumatran orangutan).